Consider the following 159-residue polypeptide: Large ribosomal subunit protein uL15 (159 aa).

The disordered stretch occupies residues 14 to 44; it reads ASRKRVGRGRATGWGCTSGRGNKGQNSRAGA. The span at 23–35 shows a compositional bias: gly residues; the sequence is RATGWGCTSGRGN.

It belongs to the universal ribosomal protein uL15 family. Part of the 50S ribosomal subunit.

Its function is as follows. Binds to the 23S rRNA. This chain is Large ribosomal subunit protein uL15, found in Solidesulfovibrio magneticus (strain ATCC 700980 / DSM 13731 / RS-1) (Desulfovibrio magneticus).